A 486-amino-acid polypeptide reads, in one-letter code: Protein nucleotidyltransferase YdiU (486 aa).

ATP is bound by residues G90, G92, R93, K113, D125, G126, R176, and R183. The Proton acceptor role is filled by D252. The Mg(2+) site is built by N253 and D262. D262 lines the ATP pocket.

This sequence belongs to the SELO family. Mg(2+) is required as a cofactor. The cofactor is Mn(2+).

The enzyme catalyses L-seryl-[protein] + ATP = 3-O-(5'-adenylyl)-L-seryl-[protein] + diphosphate. The catalysed reaction is L-threonyl-[protein] + ATP = 3-O-(5'-adenylyl)-L-threonyl-[protein] + diphosphate. It catalyses the reaction L-tyrosyl-[protein] + ATP = O-(5'-adenylyl)-L-tyrosyl-[protein] + diphosphate. It carries out the reaction L-histidyl-[protein] + UTP = N(tele)-(5'-uridylyl)-L-histidyl-[protein] + diphosphate. The enzyme catalyses L-seryl-[protein] + UTP = O-(5'-uridylyl)-L-seryl-[protein] + diphosphate. The catalysed reaction is L-tyrosyl-[protein] + UTP = O-(5'-uridylyl)-L-tyrosyl-[protein] + diphosphate. Functionally, nucleotidyltransferase involved in the post-translational modification of proteins. It can catalyze the addition of adenosine monophosphate (AMP) or uridine monophosphate (UMP) to a protein, resulting in modifications known as AMPylation and UMPylation. The polypeptide is Protein nucleotidyltransferase YdiU (Pseudomonas aeruginosa (strain LESB58)).